Reading from the N-terminus, the 181-residue chain is uncharacterized protein (181 aa).

This sequence to M.pneumoniae MPN_635 C-terminal region.

This is an uncharacterized protein from Mycoplasma pneumoniae (strain ATCC 29342 / M129 / Subtype 1) (Mycoplasmoides pneumoniae).